The following is a 116-amino-acid chain: Toxin CSTX-10 (116 aa).

The signal sequence occupies residues 1 to 20 (MKVLVIFAVLSLVIFSNCSA). The propeptide occupies 21 to 47 (ETDEDFFGEESFEADDIIPFIAKEQVR). 4 disulfide bridges follow: C53–C68, C60–C77, C67–C94, and C79–C92.

In terms of tissue distribution, expressed by the venom gland.

The protein resides in the secreted. It is found in the target cell membrane. Spider venom toxin that shows calcium channel blocking activity and exhibits cytolytic activity by affecting the outer leaflet curvature and/or pore formation across the membrane. It blocks L-type calcium channels (Cav1/CACNA1) in mammalian neurons at nanomolar concentrations. Furthermore, it produces a slow voltage-independent block of mid/low and high voltage-activated calcium channels in cockroach neurons. Potassium ions, histamine, M-ctenitoxin-Cs1a (AC P83619), CSTX-9 (AC P58604), and CSTX-13 (AC P83919) synergistically increase the insecticidal activity of this toxin. In vivo, it causes paralysis in blow flies and provokes death in drosophila. The chain is Toxin CSTX-10 from Cupiennius salei (American wandering spider).